A 79-amino-acid polypeptide reads, in one-letter code: Cytochrome b-c1 complex subunit 10 (79 aa).

The Mitochondrial matrix segment spans residues Met-1–Glu-23. Residues Arg-24–Ala-47 form a helical membrane-spanning segment. Residues Met-48 to Leu-79 lie on the Mitochondrial intermembrane side of the membrane.

The protein belongs to the UQCR11/QCR10 family. As to quaternary structure, component of the ubiquinol-cytochrome c oxidoreductase (cytochrome b-c1 complex, complex III, CIII), a multisubunit enzyme composed of 3 respiratory subunits cytochrome b, cytochrome c1 and Rieske protein, 2 core protein subunits, and additional low-molecular weight protein subunits. The complex exists as an obligatory dimer and forms supercomplexes (SCs) in the inner mitochondrial membrane with cytochrome c oxidase (complex IV, CIV).

The protein resides in the mitochondrion inner membrane. Its function is as follows. Component of the ubiquinol-cytochrome c oxidoreductase, a multisubunit transmembrane complex that is part of the mitochondrial electron transport chain which drives oxidative phosphorylation. The respiratory chain contains 3 multisubunit complexes succinate dehydrogenase (complex II, CII), ubiquinol-cytochrome c oxidoreductase (cytochrome b-c1 complex, complex III, CIII) and cytochrome c oxidase (complex IV, CIV), that cooperate to transfer electrons derived from NADH and succinate to molecular oxygen, creating an electrochemical gradient over the inner membrane that drives transmembrane transport and the ATP synthase. The cytochrome b-c1 complex catalyzes electron transfer from ubiquinol to cytochrome c, linking this redox reaction to translocation of protons across the mitochondrial inner membrane, with protons being carried across the membrane as hydrogens on the quinol. In the process called Q cycle, 2 protons are consumed from the matrix, 4 protons are released into the intermembrane space and 2 electrons are passed to cytochrome c. QCR10 has a role in CIII assembly and RIP1 stability. In Schizosaccharomyces pombe (strain 972 / ATCC 24843) (Fission yeast), this protein is Cytochrome b-c1 complex subunit 10.